A 193-amino-acid chain; its full sequence is Ion-translocating oxidoreductase complex subunit B (193 aa).

The hydrophobic stretch occupies residues Met-1–Ser-23. Positions Glu-29–Val-87 constitute a 4Fe-4S domain. [4Fe-4S] cluster is bound by residues Cys-46, Cys-49, Cys-54, Cys-70, Cys-110, Cys-113, Cys-116, Cys-120, Cys-140, Cys-143, Cys-146, and Cys-150. 2 consecutive 4Fe-4S ferredoxin-type domains span residues Lys-101–Lys-130 and Ala-131–Val-160.

This sequence belongs to the 4Fe4S bacterial-type ferredoxin family. RnfB subfamily. In terms of assembly, the complex is composed of six subunits: RnfA, RnfB, RnfC, RnfD, RnfE and RnfG. Requires [4Fe-4S] cluster as cofactor.

It is found in the cell inner membrane. Part of a membrane-bound complex that couples electron transfer with translocation of ions across the membrane. This chain is Ion-translocating oxidoreductase complex subunit B, found in Haemophilus influenzae (strain 86-028NP).